The sequence spans 403 residues: JmjC domain-containing histone demethylation protein 1 (403 aa).

The region spanning Trp141–Lys328 is the JmjC domain. Position 221 (Thr221) interacts with substrate. Residues His224 and Asp226 each contribute to the Fe cation site. Lys241 provides a ligand contact to substrate. A Fe cation-binding site is contributed by His296.

Belongs to the JHDM1 histone demethylase family. Fe(2+) serves as cofactor.

The protein resides in the nucleus. It catalyses the reaction N(6),N(6)-dimethyl-L-lysyl(36)-[histone H3] + 2 2-oxoglutarate + 2 O2 = L-lysyl(36)-[histone H3] + 2 formaldehyde + 2 succinate + 2 CO2. Histone demethylase that specifically demethylates 'Lys-36' of histone H3, thereby playing a central role in histone code. This is JmjC domain-containing histone demethylation protein 1 (JHD1) from Candida glabrata (strain ATCC 2001 / BCRC 20586 / JCM 3761 / NBRC 0622 / NRRL Y-65 / CBS 138) (Yeast).